A 194-amino-acid polypeptide reads, in one-letter code: 7-methyl-GTP pyrophosphatase (194 aa).

Residue D69 is the Proton acceptor of the active site.

This sequence belongs to the Maf family. YceF subfamily. The cofactor is a divalent metal cation.

Its subcellular location is the cytoplasm. It carries out the reaction N(7)-methyl-GTP + H2O = N(7)-methyl-GMP + diphosphate + H(+). Its function is as follows. Nucleoside triphosphate pyrophosphatase that hydrolyzes 7-methyl-GTP (m(7)GTP). May have a dual role in cell division arrest and in preventing the incorporation of modified nucleotides into cellular nucleic acids. In Shigella boydii serotype 4 (strain Sb227), this protein is 7-methyl-GTP pyrophosphatase (yceF1).